Here is a 352-residue protein sequence, read N- to C-terminus: Phosphoribosylformylglycinamidine cyclo-ligase (352 aa).

It belongs to the AIR synthase family.

It localises to the cytoplasm. It carries out the reaction 2-formamido-N(1)-(5-O-phospho-beta-D-ribosyl)acetamidine + ATP = 5-amino-1-(5-phospho-beta-D-ribosyl)imidazole + ADP + phosphate + H(+). Its pathway is purine metabolism; IMP biosynthesis via de novo pathway; 5-amino-1-(5-phospho-D-ribosyl)imidazole from N(2)-formyl-N(1)-(5-phospho-D-ribosyl)glycinamide: step 2/2. The sequence is that of Phosphoribosylformylglycinamidine cyclo-ligase from Nitrosospira multiformis (strain ATCC 25196 / NCIMB 11849 / C 71).